The primary structure comprises 217 residues: Ufm1-specific protease 1 (217 aa).

Catalysis depends on residues Cys-53, Asp-175, and His-177.

The protein belongs to the peptidase C78 family. In terms of tissue distribution, widely expressed. Expressed at higher level in brain, heart, kidney and skeletal muscle.

It localises to the cytoplasm. It is found in the cytosol. Its function is as follows. Thiol-dependent isopeptidase that specifically mediate the processing of UFM1 precursors as well as the deconjugation of UFM1 from target proteins. Mainly responsible for the maturation of the UFM1 precursor, a prerequisite for conjugation reactions. The protein is Ufm1-specific protease 1 of Mus musculus (Mouse).